A 310-amino-acid polypeptide reads, in one-letter code: Protoheme IX farnesyltransferase (310 aa).

Transmembrane regions (helical) follow at residues 30–47 (VTTL…FGAA), 50–70 (GLPL…LVSG), 102–122 (LGHG…YLGL), 126–146 (WLTA…YTPL), 152–172 (ICTT…WTAI), 181–201 (VALF…IAWL), 228–248 (IVIY…LRFA), 251–271 (IYFL…LRMF), and 286–306 (ARQL…VMML).

It belongs to the UbiA prenyltransferase family. Protoheme IX farnesyltransferase subfamily.

It is found in the cell inner membrane. It catalyses the reaction heme b + (2E,6E)-farnesyl diphosphate + H2O = Fe(II)-heme o + diphosphate. Its pathway is porphyrin-containing compound metabolism; heme O biosynthesis; heme O from protoheme: step 1/1. Its function is as follows. Converts heme B (protoheme IX) to heme O by substitution of the vinyl group on carbon 2 of heme B porphyrin ring with a hydroxyethyl farnesyl side group. This Koribacter versatilis (strain Ellin345) protein is Protoheme IX farnesyltransferase.